The following is a 719-amino-acid chain: MSKVVYEGWMVRYGRRKIGRSYIHMRYFVLEPRLLAYYKKKPQDNQLPIKTMVIDGNCRVEDRGLKTHHGHMVYVLSIYNKKEKHHRITMAAFNIQEALMWKEKIECVIDQHQDSLVPSGQQYVSFEYKPGMDAGRTASSSDHESPFSALEDENDSQRDLLRRTTIGNGPPESILDWTKEFDAELSNQSSSNQAFSRKHWRLLQCQNGLRIFEELLEVDYLPRSCSRAMKAVGVVEATCEEIFELVMSMDGTRYEWDCSFHNGRLVEEVDGHTAILYHRLLLDWFPMVVWPRDLCYVRYWRRNDDGSYVVLFRSREHENCGPQPGFVRAHLESGGFNIAPLKPRNGRPRTQVQHLIQIDLKGWGSGYLPAFQQHCLLQMLNSVSGLREWFSQTDDRGQPIRIPVMVNMASSSLALGKGGKHHHKSSLSIDQTNGASRNSVLMDEDSDDDDEFQIPDSEPEPETSKQDQETDAKKTEEPALNIDLSCFSGNLRHDDNENARNCWRISDGNNFKVRGKSFCDDKRKIPAGKHLMDLVAVDWFKDTKRMDHVVRRKGCAAQVAAEKGLFSTVVNVQVPGSTHYSMVFYFVTKELVPGSLFQRFVDGDDEFRNSRLKLIPLVPKGSWIVRQSVGSTPCLLGKAVDCNYIRGPTYLEIDVDIGSSTVANGVLGLVIGVITSLVVEMAFLVQANTPEELPERLIGAVRVSHVELSSAIVPNLDSD.

The region spanning 3-110 (KVVYEGWMVR…WKEKIECVID (108 aa)) is the PH domain. Residues 134 to 173 (AGRTASSSDHESPFSALEDENDSQRDLLRRTTIGNGPPES) form a disordered region. One can recognise an START domain in the interval 180–392 (EFDAELSNQS…VSGLREWFSQ (213 aa)). A disordered region spans residues 414-478 (ALGKGGKHHH…ETDAKKTEEP (65 aa)). Over residues 426–439 (SLSIDQTNGASRNS) the composition is skewed to polar residues. Residues 442 to 461 (MDEDSDDDDEFQIPDSEPEP) are compositionally biased toward acidic residues. Residues 462–477 (ETSKQDQETDAKKTEE) show a composition bias toward basic and acidic residues. The helical transmembrane segment at 665–685 (GVLGLVIGVITSLVVEMAFLV) threads the bilayer.

It is found in the endoplasmic reticulum membrane. The protein localises to the cell membrane. The protein resides in the endosome membrane. Its function is as follows. Binds to phosphatidylinositol-4-phosphate (PtdIns(4)P). May regulate the salicylic acid- (SA-) mediated resistance to pathogens. In Arabidopsis thaliana (Mouse-ear cress), this protein is Protein ENHANCED DISEASE RESISTANCE 2-like (EDR2L).